A 251-amino-acid polypeptide reads, in one-letter code: Hydroxyacylglutathione hydrolase (251 aa).

Zn(2+) contacts are provided by His-53, His-55, Asp-57, His-58, His-110, Asp-127, and His-165.

Belongs to the metallo-beta-lactamase superfamily. Glyoxalase II family. As to quaternary structure, monomer. It depends on Zn(2+) as a cofactor.

It carries out the reaction an S-(2-hydroxyacyl)glutathione + H2O = a 2-hydroxy carboxylate + glutathione + H(+). The protein operates within secondary metabolite metabolism; methylglyoxal degradation; (R)-lactate from methylglyoxal: step 2/2. Functionally, thiolesterase that catalyzes the hydrolysis of S-D-lactoyl-glutathione to form glutathione and D-lactic acid. This is Hydroxyacylglutathione hydrolase from Escherichia coli O81 (strain ED1a).